The chain runs to 318 residues: cAMP/cGMP dual specificity phosphodiesterase MT0825 (318 aa).

Residues aspartate 21, histidine 23, and aspartate 63 each contribute to the Fe cation site. AMP is bound by residues histidine 23, aspartate 63, and 97–98; that span reads NH. Mn(2+) is bound by residues aspartate 63, asparagine 97, histidine 169, and histidine 207. Fe cation is bound at residue histidine 209. An AMP-binding site is contributed by histidine 209. The tract at residues 278-318 is C-terminal extension; it reads PGQARRKIAESGIFIEPSRRDSLFKHPPMVLTSSAPRSPVD.

Belongs to the cyclic nucleotide phosphodiesterase class-III family. Homodimer. It depends on Fe(3+) as a cofactor. The cofactor is Mn(2+).

The protein localises to the cytoplasm. It localises to the cell membrane. Its subcellular location is the secreted. The protein resides in the cell wall. It is found in the cell envelope. It catalyses the reaction a nucleoside 2',3'-cyclic phosphate + H2O = a nucleoside 3'-phosphate + H(+). It carries out the reaction 2',3'-cyclophospho-AMP + H2O = 3'-AMP + H(+). The enzyme catalyses 2',3'-cyclophospho-GMP + H2O = 3'-GMP + H(+). The catalysed reaction is a nucleoside 3',5'-cyclic phosphate + H2O = a nucleoside 5'-phosphate + H(+). It catalyses the reaction 3',5'-cyclic AMP + H2O = AMP + H(+). It carries out the reaction 3',5'-cyclic GMP + H2O = GMP + H(+). Its function is as follows. Cyclic nucleotide phosphodiesterase with a dual-specificity for the second messengers cAMP and cGMP. This chain is cAMP/cGMP dual specificity phosphodiesterase MT0825, found in Mycobacterium tuberculosis (strain CDC 1551 / Oshkosh).